The chain runs to 176 residues: Protein MAL2 (176 aa).

Residues 1–34 are Cytoplasmic-facing; that stretch reads MSAGGASVPPPPNPAVSFPVPRVTLPAGPDILRT. In terms of domain architecture, MARVEL spans 31–175; that stretch reads ILRTYSGAFV…SLGLALRRWR (145 aa). Residues 35–55 traverse the membrane as a helical segment; it reads YSGAFVCLEILFGGLVWILVA. Topologically, residues 56–66 are lumenal; the sequence is SSNVPLPLLQG. A helical transmembrane segment spans residues 67 to 87; that stretch reads WVMFVSVTAFFFSLLFLGLFL. Residues 88–102 lie on the Cytoplasmic side of the membrane; it reads SGMVTQIDANWNFLD. A helical transmembrane segment spans residues 103–123; the sequence is FAYHFTVFVFYFGAFLLEAAA. Over 124–149 the chain is Lumenal; that stretch reads TSLHDLHYNITMTGQPLLNDNQYNIN. A glycan (N-linked (GlcNAc...) asparagine) is linked at Asn-132. Residues 150–170 form a helical membrane-spanning segment; the sequence is VAASIFAFMTTACYGCSLGLA. The Cytoplasmic portion of the chain corresponds to 171–176; that stretch reads LRRWRP.

Belongs to the MAL family. In terms of assembly, interacts with TPD52L2.

It is found in the cell membrane. It localises to the apical cell membrane. Member of the machinery of polarized transport. Required for the indirect transcytotic route at the step of the egress of the transcytosing cargo from perinuclear endosomes in order for it to travel to the apical surface via a raft-dependent pathway. The chain is Protein MAL2 (MAL2) from Pongo abelii (Sumatran orangutan).